The chain runs to 582 residues: 2-isopropylmalate synthase (582 aa).

Residues 40–314 (PRWCAVDLRD…DPMIDFSDID (275 aa)) enclose the Pyruvate carboxyltransferase domain. Mg(2+)-binding residues include Asp49, His253, His255, and Asn289. Positions 456–582 (SPAGHPGGQW…NRAIRDNQVD (127 aa)) are regulatory domain.

Belongs to the alpha-IPM synthase/homocitrate synthase family. LeuA type 2 subfamily. Homodimer. The cofactor is Mg(2+).

It is found in the cytoplasm. It carries out the reaction 3-methyl-2-oxobutanoate + acetyl-CoA + H2O = (2S)-2-isopropylmalate + CoA + H(+). It functions in the pathway amino-acid biosynthesis; L-leucine biosynthesis; L-leucine from 3-methyl-2-oxobutanoate: step 1/4. In terms of biological role, catalyzes the condensation of the acetyl group of acetyl-CoA with 3-methyl-2-oxobutanoate (2-ketoisovalerate) to form 3-carboxy-3-hydroxy-4-methylpentanoate (2-isopropylmalate). The chain is 2-isopropylmalate synthase from Renibacterium salmoninarum (strain ATCC 33209 / DSM 20767 / JCM 11484 / NBRC 15589 / NCIMB 2235).